The chain runs to 291 residues: Formamidopyrimidine-DNA glycosylase (291 aa).

Residue P2 is the Schiff-base intermediate with DNA of the active site. The active-site Proton donor is E3. The active-site Proton donor; for beta-elimination activity is K58. 3 residues coordinate DNA: H104, R127, and R172. Residues 257–291 form an FPG-type zinc finger; that stretch reads FVYDRAGLPCRACGTPIRQIVQGQRSTFCCPTCQR. R281 acts as the Proton donor; for delta-elimination activity in catalysis.

This sequence belongs to the FPG family. As to quaternary structure, monomer. It depends on Zn(2+) as a cofactor.

The catalysed reaction is Hydrolysis of DNA containing ring-opened 7-methylguanine residues, releasing 2,6-diamino-4-hydroxy-5-(N-methyl)formamidopyrimidine.. The enzyme catalyses 2'-deoxyribonucleotide-(2'-deoxyribose 5'-phosphate)-2'-deoxyribonucleotide-DNA = a 3'-end 2'-deoxyribonucleotide-(2,3-dehydro-2,3-deoxyribose 5'-phosphate)-DNA + a 5'-end 5'-phospho-2'-deoxyribonucleoside-DNA + H(+). Functionally, involved in base excision repair of DNA damaged by oxidation or by mutagenic agents. Acts as a DNA glycosylase that recognizes and removes damaged bases. Has a preference for oxidized purines, such as 7,8-dihydro-8-oxoguanine (8-oxoG). Has AP (apurinic/apyrimidinic) lyase activity and introduces nicks in the DNA strand. Cleaves the DNA backbone by beta-delta elimination to generate a single-strand break at the site of the removed base with both 3'- and 5'-phosphates. The protein is Formamidopyrimidine-DNA glycosylase of Ralstonia pickettii (strain 12J).